The chain runs to 120 residues: UPF0231 protein KPK_4613 (120 aa).

This sequence belongs to the UPF0231 family.

This chain is UPF0231 protein KPK_4613, found in Klebsiella pneumoniae (strain 342).